The sequence spans 388 residues: Probable E3 ubiquitin-protein ligase LOG2 (388 aa).

A disordered region spans residues 1–43; it reads MGNISSSGGEGRRRRRRNHTAAPPPPPPPPSSSLPPPPLPTEI. Gly2 carries the N-myristoyl glycine lipid modification. Over residues 22–40 the composition is skewed to pro residues; the sequence is APPPPPPPPSSSLPPPPLP. A DAR2 domain region spans residues 159–281; the sequence is FTFDATVSGR…GEIKIRVVKQ (123 aa). The segment at 319-358 adopts an RING-type; atypical zinc-finger fold; it reads CVICLSEPRDTTVLPCRHMCMCSGCAKVLRFQTNRCPICR. The disordered stretch occupies residues 368 to 388; sequence KVHGNNGSGNNTGQGETVEQE.

The protein belongs to the RING-type zinc finger family. LOG2 subfamily. As to quaternary structure, interacts with GDU1. Post-translationally, myristoylated (in vitro). Expressed in the vascular tissues in both phloem and xylem parenchyma cells.

Its subcellular location is the cell membrane. The enzyme catalyses S-ubiquitinyl-[E2 ubiquitin-conjugating enzyme]-L-cysteine + [acceptor protein]-L-lysine = [E2 ubiquitin-conjugating enzyme]-L-cysteine + N(6)-ubiquitinyl-[acceptor protein]-L-lysine.. Its pathway is protein modification; protein ubiquitination. Acts as an E3 ubiquitin-protein ligase, or as part of E3 complex, which accepts ubiquitin from specific E2 ubiquitin-conjugating enzymes and then transfers it to substrates (in vitro). Required for GLUTAMINE DUMPER 1(GDU1)-induced amino acid secretion and for amino acid homeostasis. Ubiquitinates GDU1 (in vitro). The protein is Probable E3 ubiquitin-protein ligase LOG2 (LOG2) of Arabidopsis thaliana (Mouse-ear cress).